The primary structure comprises 189 residues: Chitin synthase 1 (189 aa).

Belongs to the chitin synthase family.

The protein resides in the cell membrane. The enzyme catalyses [(1-&gt;4)-N-acetyl-beta-D-glucosaminyl](n) + UDP-N-acetyl-alpha-D-glucosamine = [(1-&gt;4)-N-acetyl-beta-D-glucosaminyl](n+1) + UDP + H(+). Its function is as follows. Polymerizes chitin, a structural polymer of the cell wall and septum, by transferring the sugar moiety of UDP-GlcNAc to the non-reducing end of the growing chitin polymer. The chain is Chitin synthase 1 (CHS1) from Xylohypha bantiana.